Reading from the N-terminus, the 429-residue chain is MERKQAEYSNLDERYAIQGEKYQGQQYSHIYFTRLHHMRNLLHALVPSWKPHLPVTTVLGLEEGKDCIIVGTLYKHMKLKPSILDEYSKERSAIPLVKPHNFMHPDDHLILEDESGRVTLAGAIPPAAYVTGVVIALHGKETSAGNFLVEDILEAGIPPQITLPSINEDKYVVFVSGLSIGSEKFNPLQFQLLIDHITGHLGDENEQSIASNIVRVVVAGNSVHISPRFFNGQAVASKDQSRIAEPIKELDIMLTQLVASLPVDMMPGSNDPANFSLPQQPLHRCLFAGAATYNTFSSCSNPHQFELDSVRFIGTSGQNIDDLYKYSDAKDKLEFVERTLRWRHLAPTAPNSLGCYPYTDKDPFLVESCPHVYFVGNQDKYETQLLQGLEKQKVRLICIPRFCDSGVAVMLNLRNLECSTLSFSTSFDA.

It belongs to the DNA polymerase delta/II small subunit family. In terms of assembly, heterodimer with subunits of 125 kDa and 50 kDa.

The protein localises to the nucleus. It carries out the reaction DNA(n) + a 2'-deoxyribonucleoside 5'-triphosphate = DNA(n+1) + diphosphate. The function of the small subunit is not yet clear. The protein is DNA polymerase delta small subunit (POLD2) of Oryza sativa subsp. japonica (Rice).